Consider the following 478-residue polypeptide: Putative multidrug resistance outer membrane protein MdtQ (478 aa).

The N-terminal stretch at 1 to 21 (MNRDSFYPAIACFPLLLMLAG) is a signal peptide. Cysteine 22 carries the N-palmitoyl cysteine lipid modification. Cysteine 22 is lipidated: S-diacylglycerol cysteine.

This sequence belongs to the outer membrane factor (OMF) (TC 1.B.17) family.

It localises to the cell outer membrane. Its function is as follows. Could be involved in resistance to puromycin, acriflavine and tetraphenylarsonium chloride. The sequence is that of Putative multidrug resistance outer membrane protein MdtQ (mdtQ) from Escherichia coli (strain K12).